The chain runs to 56 residues: Large ribosomal subunit protein bL33c (56 aa).

Belongs to the bacterial ribosomal protein bL33 family.

The protein localises to the plastid. The protein resides in the chloroplast. This is Large ribosomal subunit protein bL33c from Rhodomonas salina (Cryptomonas salina).